A 133-amino-acid polypeptide reads, in one-letter code: NADPH-dependent 7-cyano-7-deazaguanine reductase (133 aa).

The active-site Thioimide intermediate is Cys49. Asp56 serves as the catalytic Proton donor. Residues 71-73 (IEL) and 90-91 (HE) contribute to the substrate site.

The protein belongs to the GTP cyclohydrolase I family. QueF type 1 subfamily.

The protein resides in the cytoplasm. It carries out the reaction 7-aminomethyl-7-carbaguanine + 2 NADP(+) = 7-cyano-7-deazaguanine + 2 NADPH + 3 H(+). Its pathway is tRNA modification; tRNA-queuosine biosynthesis. Functionally, catalyzes the NADPH-dependent reduction of 7-cyano-7-deazaguanine (preQ0) to 7-aminomethyl-7-deazaguanine (preQ1). This Leptospira interrogans serogroup Icterohaemorrhagiae serovar copenhageni (strain Fiocruz L1-130) protein is NADPH-dependent 7-cyano-7-deazaguanine reductase.